The primary structure comprises 471 residues: 3-isopropylmalate dehydratase large subunit (471 aa).

Cys-347, Cys-407, and Cys-410 together coordinate [4Fe-4S] cluster.

It belongs to the aconitase/IPM isomerase family. LeuC type 1 subfamily. In terms of assembly, heterodimer of LeuC and LeuD. It depends on [4Fe-4S] cluster as a cofactor.

It catalyses the reaction (2R,3S)-3-isopropylmalate = (2S)-2-isopropylmalate. It participates in amino-acid biosynthesis; L-leucine biosynthesis; L-leucine from 3-methyl-2-oxobutanoate: step 2/4. Catalyzes the isomerization between 2-isopropylmalate and 3-isopropylmalate, via the formation of 2-isopropylmaleate. This chain is 3-isopropylmalate dehydratase large subunit, found in Geobacillus kaustophilus (strain HTA426).